Consider the following 274-residue polypeptide: Large ribosomal subunit protein uL2 (274 aa).

A disordered region spans residues Val-223–Lys-274.

The protein belongs to the universal ribosomal protein uL2 family. As to quaternary structure, part of the 50S ribosomal subunit. Forms a bridge to the 30S subunit in the 70S ribosome.

One of the primary rRNA binding proteins. Required for association of the 30S and 50S subunits to form the 70S ribosome, for tRNA binding and peptide bond formation. It has been suggested to have peptidyltransferase activity; this is somewhat controversial. Makes several contacts with the 16S rRNA in the 70S ribosome. This is Large ribosomal subunit protein uL2 from Aliivibrio salmonicida (strain LFI1238) (Vibrio salmonicida (strain LFI1238)).